We begin with the raw amino-acid sequence, 396 residues long: Agropine synthesis cyclase (396 aa).

This sequence belongs to the peptidase M24B family.

This chain is Agropine synthesis cyclase (ags), found in Rhizobium rhizogenes (Agrobacterium rhizogenes).